Consider the following 1106-residue polypeptide: MVYTALTWQRLHGTAAGLVPSHLPQEGEKGSTHPTPRPLGTTPRVTAHIEPPRPWAAGAEPPLPAGDGSARESSPFIGSAAADGDSLLEGKNMALFEEEMDSNPMVSSLLNKLANYTNLSQGVVDHEEAEDSRPRESKAPCMGTFIGVYLPCLQNILGVILFLRLTWIVGAAGVLESFLVVSMCCTCTMLTAVSMSAIATNGVVPAGGSYYMISRSLGPEFGGAVGLCFYLGTTFAGAMYILGTIEIFLTYISPGAAVFQAETPEGEAAALLHNMRVYGSCTLALMAVVVFVGVKYVNKLALVFLACVVLSILAIYAGVIKTAFDPPDIPVCLLGNRTLARRGFDTCAKVRAVSNGTATTALWGLFCNGSSLDTACNEYFAQNNVTEIQGIPGVASGVLLDNLWSAYSDRGAFVEKKGVASVPTPEDGRASGLPYVLSDITTYFTVLVGIYFPSVTGIMAGSNRSGDLKDAQKSIPTGTILAIVTTSFIYLSCIVLFGACIEGVVLRDKFGEALQGNLVIGMLAWPSPWVIVIGSFFSTCGAGLQSLTGAPRLLQAIARDGIVPFLQVFGHGKANGEPTWALLLTALICETGILIASLDSVAPILSMFFLMCYMFVNLACAVQTLLRTPNWRPRFKYYHWTLSFLGMSLCLALMFICSWYYALFAMLIAGCIYKYIEYRGAEKEWGDGIRGLSLNAARYALLRVEHGPPHTKNWRPQVLVMLTLDAEQRVTHPRLLSFTSQLKAGKGLTIVGSVLEGTFLDKHVEAQRAEENIRALMGAEKMKGFCQLVVSSSLRDGCSHLIQAAGLGGMKHNTVLMAWPEAWKQPDSPYSWKYFVDTVRDTTAAQQALLVAKNIDAFPQNQERFSEGSIDVWWVVHDGGMLMLLPFLLRQHKVWRKCRMRIFTVAQVDDNSVQMKKDLQMFLYHLRISAEVEVVEMVENDISAFTYEKTLLMEQRSQMLKQMQLTKGEREREAQLIHDRNTASHTAASRAQAPPTPDKVQMTWTKEKLTAEKHRNKDAGAAGFRDLFSLKPDHSNVRRMHTAVKLNGVVLSRSQDAQLVLLNMPGPPKNRQGDENYMEFLEVLTEGLNRVVLVRGGGREVITIYS.

Residues 1 to 143 (MVYTALTWQR…PRESKAPCMG (143 aa)) are Cytoplasmic-facing. The segment at 17–83 (GLVPSHLPQE…SPFIGSAAAD (67 aa)) is disordered. A phosphoserine mark is found at Ser-74 and Ser-86. A discontinuously helical membrane pass occupies residues 144-166 (TFIGVYLPCLQNILGVILFLRLT). Positions 155 and 156 each coordinate K(+). Val-159 is a chloride binding site. Residues 167-173 (WIVGAAG) are Extracellular-facing. Residues 174–196 (VLESFLVVSMCCTCTMLTAVSMS) traverse the membrane as a helical segment. Topologically, residues 197-220 (AIATNGVVPAGGSYYMISRSLGPE) are cytoplasmic. Residues 221-249 (FGGAVGLCFYLGTTFAGAMYILGTIEIFL) traverse the membrane as a helical segment. Residues 250-273 (TYISPGAAVFQAETPEGEAAALLH) are Extracellular-facing. Helical transmembrane passes span 274 to 295 (NMRV…VGVK) and 296 to 324 (YVNK…KTAF). Residues 325-443 (DPPDIPVCLL…PYVLSDITTY (119 aa)) lie on the Extracellular side of the membrane. N-linked (GlcNAc...) asparagine glycosylation is found at Asn-336, Asn-355, and Asn-384. Residues 444–464 (FTVLVGIYFPSVTGIMAGSNR) form a helical membrane-spanning segment. Residues Pro-453 and Thr-456 each contribute to the K(+) site. Residue Pro-453 participates in chloride binding. Chloride contacts are provided by Gly-457 and Ile-458. Topologically, residues 465–474 (SGDLKDAQKS) are cytoplasmic. A helical transmembrane segment spans residues 475–497 (IPTGTILAIVTTSFIYLSCIVLF). At 498–528 (GACIEGVVLRDKFGEALQGNLVIGMLAWPSP) the chain is on the extracellular side. The chain crosses the membrane as a helical span at residues 529-555 (WVIVIGSFFSTCGAGLQSLTGAPRLLQ). Residues 556-578 (AIARDGIVPFLQVFGHGKANGEP) lie on the Cytoplasmic side of the membrane. The next 2 membrane-spanning stretches (helical) occupy residues 579–597 (TWAL…LIAS) and 598–622 (LDSV…ACAV). Tyr-613 lines the chloride pocket. The Cytoplasmic segment spans residues 623–636 (QTLLRTPNWRPRFK). 2 helical membrane-spanning segments follow: residues 637–659 (YYHW…ICSW) and 660–675 (YYAL…IYKY). Residues 676 to 1106 (IEYRGAEKEW…GGREVITIYS (431 aa)) are Cytoplasmic-facing. The segment at 688-704 (GIRGLSLNAARYALLRV) is scissor helix. Residues 980-999 (RNTASHTAASRAQAPPTPDK) are disordered. Phosphothreonine is present on residues Thr-996 and Thr-1003.

The protein belongs to the SLC12A transporter family. K/Cl co-transporter subfamily. As to quaternary structure, homodimer; adopts a domain-swap conformation at the scissor helices connecting the transmembrane domain and C-terminal domain. Heterodimer with K-Cl cotransporter SLC12A5. As to expression, widely expressed. Higher levels in heart, kidney and lung (at protein level).

It is found in the cell membrane. The enzyme catalyses K(+)(in) + chloride(in) = K(+)(out) + chloride(out). With respect to regulation, activated by N-ethylmaleimide (NEM). Inhibited by furosemide, DIDS and bumetanide. The inhibition is much stronger in the presence of 50 mM K(+) in the uptake medium. Inhibited by DIOA. Inhibited by WNK3. Mediates electroneutral potassium-chloride cotransport when activated by cell swelling. May mediate K(+) uptake into Deiters' cells in the cochlea and contribute to K(+) recycling in the inner ear. Important for the survival of cochlear outer and inner hair cells and the maintenance of the organ of Corti. May be required for basolateral Cl(-) extrusion in the kidney and contribute to renal acidification. This Oryctolagus cuniculus (Rabbit) protein is Solute carrier family 12 member 7.